The following is a 311-amino-acid chain: Protease HtpX homolog 1 (311 aa).

2 helical membrane passes run 12–32 and 35–55; these read VISLGLTIISEGIVLIGIASL and ISLFFIFPALVIFWLFQWIIS. Histidine 137 contributes to the Zn(2+) binding site. Residue glutamate 138 is part of the active site. Residue histidine 141 coordinates Zn(2+). 2 helical membrane passes run 159–179 and 184–204; these read VLGYISTLLMNFGYLALFLAA and LLFAIAALAIGFVIFVVTFIL. Residue glutamate 216 participates in Zn(2+) binding.

It belongs to the peptidase M48B family. The cofactor is Zn(2+).

The protein resides in the cell membrane. This is Protease HtpX homolog 1 from Saccharolobus solfataricus (strain ATCC 35092 / DSM 1617 / JCM 11322 / P2) (Sulfolobus solfataricus).